Here is a 918-residue protein sequence, read N- to C-terminus: Plasma membrane ATPase 1 (918 aa).

Over residues 1 to 18 the composition is skewed to low complexity; that stretch reads MTDTSSSSSSSSASSVSA. Residues 1 to 84 are disordered; that stretch reads MTDTSSSSSS…VPEEYLQTDP (84 aa). Residues 1–115 lie on the Cytoplasmic side of the membrane; that stretch reads MTDTSSSSSS…ADEKESLVVK (115 aa). The segment covering 33 to 47 has biased composition (acidic residues); that stretch reads AASESSDDDDIDALI. Serine 61 carries the post-translational modification Phosphoserine. A helical membrane pass occupies residues 116–136; it reads FVMFFVGPIQFVMEAAAILAA. Residues 137–140 lie on the Extracellular side of the membrane; the sequence is GLSD. Residues 141-160 traverse the membrane as a helical segment; the sequence is WVDFGVICGLLMLNAGVGFV. Residues 161–291 lie on the Cytoplasmic side of the membrane; it reads QEFQAGSIVD…GQGHFTEVLN (131 aa). The residue at position 175 (threonine 175) is a Phosphothreonine. Lysine 252 participates in a covalent cross-link: Glycyl lysine isopeptide (Lys-Gly) (interchain with G-Cter in ubiquitin). Residues 292-313 form a helical membrane-spanning segment; the sequence is GIGIILLVLVIATLLLVWTACF. At 314 to 325 the chain is on the extracellular side; that stretch reads YRTNGIVRILRY. Residues 326–347 form a helical membrane-spanning segment; sequence TLGITIIGVPVGLPAVVTTTMA. Topologically, residues 348–719 are cytoplasmic; that stretch reads VGAAYLAKKQ…IAILDNSLDI (372 aa). Residue aspartate 378 is the 4-aspartylphosphate intermediate of the active site. Residue lysine 555 forms a Glycyl lysine isopeptide (Lys-Gly) (interchain with G-Cter in ubiquitin) linkage. The Mg(2+) site is built by aspartate 634 and aspartate 638. The chain crosses the membrane as a helical span at residues 720 to 738; that stretch reads DLIVFIAIFADVATLAIAY. Residues 739–754 lie on the Extracellular side of the membrane; the sequence is DNAPYSPKPVKWNLPR. The chain crosses the membrane as a helical span at residues 755–774; it reads LWGMSIILGIVLAIGSWITL. Residues 775 to 824 lie on the Cytoplasmic side of the membrane; sequence TTMFLPKGGIIQNFGAMNGIMFLQISLTENWLIFITRAAGPFWSSIPSWQ. A helical membrane pass occupies residues 825–845; that stretch reads LAGAVFAVDIIATMFTLFGWW. The Extracellular segment spans residues 846–857; the sequence is SENWTDIVTVVR. A helical membrane pass occupies residues 858 to 874; sequence VWIWSIGIFCVLGGFYY. Residues 875–918 lie on the Cytoplasmic side of the membrane; the sequence is EMSTSEAFDRLMNGKPMKEKKSTRSVEDFMAAMQRVSTQHEKET. Serine 911 carries the post-translational modification Phosphoserine. Residues threonine 912 and threonine 918 each carry the phosphothreonine modification.

The protein belongs to the cation transport ATPase (P-type) (TC 3.A.3) family. Type IIIA subfamily. As to quaternary structure, interacts with its cargot receptor EXP1 for its transport within the cell and maturation. Post-translationally, phosphorylated on multiple Ser and Thr residues.

The protein resides in the cell membrane. The enzyme catalyses ATP + H2O + H(+)(in) = ADP + phosphate + 2 H(+)(out). The plasma membrane ATPase of plants and fungi is a hydrogen ion pump. The proton gradient it generates drives the active transport of nutrients by H(+)-symport. The resulting external acidification and/or internal alkinization may mediate growth responses. The sequence is that of Plasma membrane ATPase 1 (PMA1) from Saccharomyces cerevisiae (strain ATCC 204508 / S288c) (Baker's yeast).